Here is a 569-residue protein sequence, read N- to C-terminus: Cytochrome P450 monooxygenase abl1 (569 aa).

A heme-binding site is contributed by Cys-464.

Belongs to the cytochrome P450 family. Heme is required as a cofactor.

Its pathway is hormone biosynthesis. Cytochrome P450 monooxygenase; part of the gene cluster that mediates the biosynthesis of abscisic acid (ABA), a phytohormone that acts antagonistically toward salicylic acid (SA), jasmonic acid (JA) and ethylene (ETH) signaling, to impede plant defense responses. The first step of the pathway catalyzes the reaction from farnesyl diphosphate to alpha-ionylideneethane performed by the alpha-ionylideneethane synthase abl3 via a three-step reaction mechanism involving 2 neutral intermediates, beta-farnesene and allofarnesene. The cytochrome P450 monooxygenase abl1 might then be involved in the conversion of alpha-ionylideneethane to alpha-ionylideneacetic acid. Alpha-ionylideneacetic acid is further converted to abscisic acid in 2 steps involving the cytochrome P450 monooxygenase abl2 and the short-chain dehydrogenase/reductase abl4, via the intermediates 1'-deoxy-ABA or 1',4'-trans-diol-ABA, depending on the order of action of these 2 enzymes. Abl2 is responsible for the hydroxylation of carbon atom C-1' and abl4 might be involved in the oxidation of the C-4' carbon atom. The polypeptide is Cytochrome P450 monooxygenase abl1 (Leptosphaeria maculans (strain JN3 / isolate v23.1.3 / race Av1-4-5-6-7-8) (Blackleg fungus)).